We begin with the raw amino-acid sequence, 903 residues long: Pentatricopeptide repeat-containing protein At3g02330, mitochondrial (903 aa).

A mitochondrion-targeting transit peptide spans 1 to 31 (MAESLRLLHMTRSVVSFNRCLTEKISYRRVP). 20 PPR repeats span residues 47–81 (STTN…GFRP), 82–112 (TTFV…MPLR), 113–143 (DVVS…MPVR), 144–178 (DVVS…GIEF), 179–213 (DGRT…GCDT), 214–244 (DVVA…IPEK), 245–279 (NSVS…NAGV), 280–314 (SQSI…DFAA), 346–380 (NRQS…GLGF), 381–415 (DEIS…SLSL), 416–446 (DVCV…MRRR), 447–481 (DAVS…RIEP), 482–515 (DEFT…GMAS), 516–550 (NSSV…ANVS), 567–601 (MCVS…GITP), 602–636 (DKFT…ELQS), 637–667 (DVYI…SLRR), 668–702 (DFVT…NIKP), 703–738 (NHVT…GLDP), and 739–769 (QLPH…MPFE). The type E motif stretch occupies residues 774 to 850 (IWRTLLGVCT…EPGCSWVELK (77 aa)). Residues 851–881 (DELHVFLVGDKAHPRWEEIYEELGLIYSEMK) are type E(+) motif.

This sequence belongs to the PPR family. PCMP-E subfamily. Interacts with MORF1/RIP8.

The protein resides in the mitochondrion. Its function is as follows. Involved in C-to-U editing of mitochondrial RNA. Required for RNA editing at 8 sites in 6 different mRNAs in mitochondria. In Arabidopsis thaliana (Mouse-ear cress), this protein is Pentatricopeptide repeat-containing protein At3g02330, mitochondrial (PCMP-E90).